A 197-amino-acid chain; its full sequence is Protein GrpE (197 aa).

The disordered stretch occupies residues 1 to 41; sequence MSSKEQKTPEGQAPEEIITEQHEEVEAVEPDASAEQVDPRD.

It belongs to the GrpE family. Homodimer.

It localises to the cytoplasm. In terms of biological role, participates actively in the response to hyperosmotic and heat shock by preventing the aggregation of stress-denatured proteins, in association with DnaK and GrpE. It is the nucleotide exchange factor for DnaK and may function as a thermosensor. Unfolded proteins bind initially to DnaJ; upon interaction with the DnaJ-bound protein, DnaK hydrolyzes its bound ATP, resulting in the formation of a stable complex. GrpE releases ADP from DnaK; ATP binding to DnaK triggers the release of the substrate protein, thus completing the reaction cycle. Several rounds of ATP-dependent interactions between DnaJ, DnaK and GrpE are required for fully efficient folding. The sequence is that of Protein GrpE from Enterobacter sp. (strain 638).